Consider the following 335-residue polypeptide: tRNA N6-adenosine threonylcarbamoyltransferase (335 aa).

Residues His-109, His-113, and Tyr-130 each coordinate a divalent metal cation. Substrate contacts are provided by residues 130-134, Asp-162, Gly-177, Glu-181, and Asn-266; that span reads YVSGG. Asp-294 serves as a coordination point for a divalent metal cation.

Belongs to the KAE1 / TsaD family. As to quaternary structure, component of the EKC/KEOPS complex composed of at least GON7, TP53RK, TPRKB, OSGEP and LAGE3; the whole complex dimerizes. The cofactor is a divalent metal cation.

It localises to the cytoplasm. It is found in the nucleus. The catalysed reaction is L-threonylcarbamoyladenylate + adenosine(37) in tRNA = N(6)-L-threonylcarbamoyladenosine(37) in tRNA + AMP + H(+). In terms of biological role, component of the EKC/KEOPS complex that is required for the formation of a threonylcarbamoyl group on adenosine at position 37 (t(6)A37) in tRNAs that read codons beginning with adenine. The complex is probably involved in the transfer of the threonylcarbamoyl moiety of threonylcarbamoyl-AMP (TC-AMP) to the N6 group of A37. OSGEP likely plays a direct catalytic role in this reaction, but requires other protein(s) of the complex to fulfill this activity. The chain is tRNA N6-adenosine threonylcarbamoyltransferase (Osgep) from Rattus norvegicus (Rat).